A 494-amino-acid chain; its full sequence is V-type proton ATPase subunit B (494 aa).

Arg384 lines the ATP pocket.

The protein belongs to the ATPase alpha/beta chains family. As to quaternary structure, V-ATPase is a heteromultimeric enzyme made up of two complexes: the ATP-hydrolytic V1 complex and the proton translocation V0 complex. The V1 complex consists of three catalytic AB heterodimers that form a heterohexamer, three peripheral stalks each consisting of EG heterodimers, one central rotor including subunits D and F, and the regulatory subunits C and H. The proton translocation complex V0 consists of the proton transport subunit a, a ring of proteolipid subunits c9c'', rotary subunit d, subunits e and f, and the accessory subunits VhaAC45 and ATP6AP2.

Functionally, non-catalytic subunit of the V1 complex of vacuolar(H+)-ATPase (V-ATPase), a multisubunit enzyme composed of a peripheral complex (V1) that hydrolyzes ATP and a membrane integral complex (V0) that translocates protons. V-ATPase is responsible for acidifying and maintaining the pH of intracellular compartments and in some cell types, is targeted to the plasma membrane, where it is responsible for acidifying the extracellular environment. Essential for the proper assembly and activity of V-ATPase. The sequence is that of V-type proton ATPase subunit B (VHA55) from Manduca sexta (Tobacco hawkmoth).